Consider the following 200-residue polypeptide: dTTP/UTP pyrophosphatase (200 aa).

The Proton acceptor role is filled by aspartate 81.

The protein belongs to the Maf family. YhdE subfamily. It depends on a divalent metal cation as a cofactor.

It is found in the cytoplasm. The catalysed reaction is dTTP + H2O = dTMP + diphosphate + H(+). The enzyme catalyses UTP + H2O = UMP + diphosphate + H(+). Functionally, nucleoside triphosphate pyrophosphatase that hydrolyzes dTTP and UTP. May have a dual role in cell division arrest and in preventing the incorporation of modified nucleotides into cellular nucleic acids. The chain is dTTP/UTP pyrophosphatase from Albidiferax ferrireducens (strain ATCC BAA-621 / DSM 15236 / T118) (Rhodoferax ferrireducens).